A 1333-amino-acid polypeptide reads, in one-letter code: Vascular endothelial growth factor receptor 1 (1333 aa).

An N-terminal signal peptide occupies residues 1–22 (MVSCWDTAVLPYALLGCLLLTG). Residues 23 to 759 (YGSGSKLKVP…QGTSDKSNLE (737 aa)) lie on the Extracellular side of the membrane. Ig-like C2-type domains lie at 32–124 (PELS…AESS), 152–215 (GRQL…VNGH), 231–328 (LDVQ…TSVH), 334–429 (FISV…NVKP), 430–550 (QIYE…RNIK), 557–656 (PNGF…EVLV), and 662–748 (PHLL…AYLT). Disulfide bonds link C53/C108 and C159/C208. N-linked (GlcNAc...) asparagine glycosylation is found at N101, N165, N197, and N252. C253 and C312 are oxidised to a cystine. Residues N324, N418, N475, N517, N598, N626, N667, and N714 are each glycosylated (N-linked (GlcNAc...) asparagine). Disulfide bonds link C455–C536 and C578–C637. A disulfide bridge links C683 with C732. Residues 760–781 (LITLTCTCVAATLFWLLLTLFI) form a helical membrane-spanning segment. Residues 782-1333 (RKLKRSSSEV…SVVLYSSPPA (552 aa)) lie on the Cytoplasmic side of the membrane. The region spanning 828–1158 (LKLGKSLGRG…ELVEKLGDLL (331 aa)) is the Protein kinase domain. ATP is bound by residues 834 to 842 (LGRGAFGKV) and K862. Y915 carries the phosphotyrosine; by autocatalysis modification. The segment at 947–983 (EPGLEQGQKPRLDSVSSSSVTSSSFPEDRSVSDVEGD) is disordered. Over residues 960-970 (SVSSSSVTSSS) the composition is skewed to low complexity. D1022 (proton acceptor) is an active-site residue. A phosphotyrosine; by autocatalysis mark is found at Y1053, Y1169, Y1213, Y1242, Y1322, and Y1328.

Belongs to the protein kinase superfamily. Tyr protein kinase family. CSF-1/PDGF receptor subfamily. Interacts with VEGFA, VEGFB and PGF. Monomer in the absence of bound VEGFA, VEGFB or PGF. Homodimer in the presence of bound VEGFA, VEGFB and PGF. Can also form a heterodimer with KDR. Interacts (tyrosine phosphorylated) with CBL, CRK, GRB2, NCK1, PIK3R1, PLCG, PSEN1 and PTPN11. Probably interacts with PTPRB. Interacts with RACK1. Identified in a complex with CBL and CD2AP. In terms of processing, N-glycosylated. Post-translationally, ubiquitinated after VEGFA-mediated autophosphorylation, leading to proteolytic degradation. Autophosphorylated on tyrosine residues upon ligand binding. Autophosphorylation occurs in trans, i.e. one subunit of the dimeric receptor phosphorylates tyrosine residues on the other subunit. Phosphorylation at Tyr-1169 is important for interaction with PLCG. Phosphorylation at Tyr-1213 is important for interaction with PIK3R1, PTPN11, GRB2, and PLCG. Phosphorylation at Tyr-1328 is important for endocytosis and for interaction with CBL, NCK1 and CRK. Is probably dephosphorylated by PTPRB.

The protein localises to the cell membrane. It is found in the endosome. The enzyme catalyses L-tyrosyl-[protein] + ATP = O-phospho-L-tyrosyl-[protein] + ADP + H(+). Present in an inactive conformation in the absence of bound ligand. Binding of VEGFA, VEGFB or PGF leads to dimerization and activation by autophosphorylation on tyrosine residues. Tyrosine-protein kinase that acts as a cell-surface receptor for VEGFA, VEGFB and PGF, and plays an essential role in the development of embryonic vasculature, the regulation of angiogenesis, cell survival, cell migration, macrophage function, chemotaxis, and cancer cell invasion. Acts as a positive regulator of postnatal retinal hyaloid vessel regression. May play an essential role as a negative regulator of embryonic angiogenesis by inhibiting excessive proliferation of endothelial cells. Can promote endothelial cell proliferation, survival and angiogenesis in adulthood. Its function in promoting cell proliferation seems to be cell-type specific. Promotes PGF-mediated proliferation of endothelial cells, and proliferation of some types of cancer cells, but does not promote proliferation of normal fibroblasts. Has very high affinity for VEGFA and relatively low protein kinase activity; may function as a negative regulator of VEGFA signaling by limiting the amount of free VEGFA and preventing its binding to KDR. Modulates KDR signaling by forming heterodimers with KDR. Ligand binding leads to the activation of several signaling cascades. Activation of PLCG leads to the production of the cellular signaling molecules diacylglycerol and inositol 1,4,5-trisphosphate and the activation of protein kinase C. Mediates phosphorylation of PIK3R1, the regulatory subunit of phosphatidylinositol 3-kinase, leading to the activation of phosphatidylinositol kinase and the downstream signaling pathway. Mediates activation of MAPK1/ERK2, MAPK3/ERK1 and the MAP kinase signaling pathway, as well as of the AKT1 signaling pathway. Phosphorylates SRC, YES1 and PLCG, and may also phosphorylate CBL. Promotes phosphorylation of AKT1 and PTK2/FAK1. This chain is Vascular endothelial growth factor receptor 1 (Flt1), found in Mus musculus (Mouse).